The sequence spans 223 residues: Alpha-S2-casein (223 aa).

The signal sequence occupies residues 1 to 15; the sequence is MKLFIFTCLLAVALA. Ser23, Ser24, Ser25, Ser28, Ser46, Ser71, Ser72, and Ser73 each carry phosphoserine. 2 repeats span residues 76–128 and 129–223; these read FADI…TLGK and EQIS…ERQA. Residues Ser132, Ser147, and Ser155 each carry the phosphoserine modification.

It belongs to the alpha-casein family. Mammary gland specific. Secreted in milk.

It is found in the secreted. Its function is as follows. Important role in the capacity of milk to transport calcium phosphate. This is Alpha-S2-casein (CSN1S2) from Cavia porcellus (Guinea pig).